The sequence spans 342 residues: L-lysine 2,3-aminomutase (342 aa).

Residues 106-329 (HKYHNRALLL…PKLAREIGGE (224 aa)) enclose the Radical SAM core domain. Residues C120, C124, and C127 each coordinate [4Fe-4S] cluster. An N6-(pyridoxal phosphate)lysine modification is found at K332.

Belongs to the radical SAM superfamily. KamA family. [4Fe-4S] cluster serves as cofactor. It depends on pyridoxal 5'-phosphate as a cofactor.

It catalyses the reaction L-lysine = D-beta-lysine. Its function is as follows. With EpmA is involved in the beta-lysylation step of the post-translational modification of translation elongation factor P (EF-P) on 'Lys-34'. EpmB appears to act before EpmA. Displays lysine 2,3-aminomutase activity, producing (R)-beta-lysine from (S)-alpha-lysine (L-lysine). Cannot use (S)-ornithine or (R)-alpha-lysine as a substrate. The sequence is that of L-lysine 2,3-aminomutase (epmB) from Escherichia coli (strain K12).